Reading from the N-terminus, the 207-residue chain is Guanylate kinase (207 aa).

One can recognise a Guanylate kinase-like domain in the interval 4-184 (GILFIISAPS…AINDLRTIII (181 aa)). Residue 11 to 18 (APSGTGKS) participates in ATP binding.

Belongs to the guanylate kinase family.

The protein resides in the cytoplasm. It catalyses the reaction GMP + ATP = GDP + ADP. In terms of biological role, essential for recycling GMP and indirectly, cGMP. The polypeptide is Guanylate kinase (Buchnera aphidicola subsp. Schizaphis graminum (strain Sg)).